A 110-amino-acid polypeptide reads, in one-letter code: UPF0122 protein SE_0911 (110 aa).

This sequence belongs to the UPF0122 family.

Might take part in the signal recognition particle (SRP) pathway. This is inferred from the conservation of its genetic proximity to ftsY/ffh. May be a regulatory protein. The chain is UPF0122 protein SE_0911 from Staphylococcus epidermidis (strain ATCC 12228 / FDA PCI 1200).